The sequence spans 204 residues: Putative 3-methyladenine DNA glycosylase (204 aa).

The protein belongs to the DNA glycosylase MPG family.

The polypeptide is Putative 3-methyladenine DNA glycosylase (Bacillus cytotoxicus (strain DSM 22905 / CIP 110041 / 391-98 / NVH 391-98)).